Here is a 91-residue protein sequence, read N- to C-terminus: Probable Fe(2+)-trafficking protein (91 aa).

It belongs to the Fe(2+)-trafficking protein family.

Could be a mediator in iron transactions between iron acquisition and iron-requiring processes, such as synthesis and/or repair of Fe-S clusters in biosynthetic enzymes. The polypeptide is Probable Fe(2+)-trafficking protein (Xanthomonas euvesicatoria pv. vesicatoria (strain 85-10) (Xanthomonas campestris pv. vesicatoria)).